A 126-amino-acid chain; its full sequence is Fluoride-specific ion channel FluC (126 aa).

Helical transmembrane passes span 3 to 23 (LSIL…WFLG), 35 to 55 (LGTL…VAYF), 68 to 88 (FIIT…AEVV), and 103 to 123 (IAIH…TVAV). The Na(+) site is built by Gly75 and Ser78.

It belongs to the fluoride channel Fluc/FEX (TC 1.A.43) family.

The protein localises to the cell inner membrane. It catalyses the reaction fluoride(in) = fluoride(out). With respect to regulation, na(+) is not transported, but it plays an essential structural role and its presence is essential for fluoride channel function. Its function is as follows. Fluoride-specific ion channel. Important for reducing fluoride concentration in the cell, thus reducing its toxicity. The polypeptide is Fluoride-specific ion channel FluC (Paraburkholderia phymatum (strain DSM 17167 / CIP 108236 / LMG 21445 / STM815) (Burkholderia phymatum)).